Here is a 348-residue protein sequence, read N- to C-terminus: Protein RecA (348 aa).

Residue 66–73 (GPESSGKT) participates in ATP binding.

This sequence belongs to the RecA family.

Its subcellular location is the cytoplasm. Functionally, can catalyze the hydrolysis of ATP in the presence of single-stranded DNA, the ATP-dependent uptake of single-stranded DNA by duplex DNA, and the ATP-dependent hybridization of homologous single-stranded DNAs. It interacts with LexA causing its activation and leading to its autocatalytic cleavage. In Legionella pneumophila (strain Lens), this protein is Protein RecA.